A 2711-amino-acid chain; its full sequence is Chromodomain-helicase-DNA-binding protein 6 (2711 aa).

4 stretches are compositionally biased toward basic and acidic residues: residues 1–12 (MKMKIQKKEKQL), 100–115 (EPGE…DREP), 122–151 (EPKE…DGVK), and 158–171 (EASG…KRSC). Disordered stretches follow at residues 1–52 (MKMK…EEAA) and 66–243 (EEAD…QVKR). Residues 1–746 (MKMKIQKKEK…MMELRKCCNH (746 aa)) are required for DNA-dependent ATPase activity. Residues 214 to 224 (SLPNPSLQSPE) show a composition bias toward low complexity. 2 consecutive Chromo domains span residues 291 to 342 (NIIE…KDPR) and 374 to 438 (IEID…KHVE). In terms of domain architecture, Helicase ATP-binding spans 472–646 (LFNWYNRKNC…FSLLNFLEPS (175 aa)). 485–492 (DEMGLGKT) serves as a coordination point for ATP. The short motif at 597-600 (DEAH) is the DEAH box element. The Helicase C-terminal domain occupies 786–955 (LIDKLLPKLI…LSKMEVEDLL (170 aa)). The disordered stretch occupies residues 1318–1389 (SLSAEQGVTD…SDPDKSPWPV (72 aa)). Residues 1320–1329 (SAEQGVTDGT) show a composition bias toward polar residues. The segment covering 1332-1350 (IPERGNIDKEDSAEDKLDG) has biased composition (basic and acidic residues). In terms of domain architecture, Myb-like spans 1448–1502 (RWTRREQADFYRTVSSFGVVYDQEKKAFDWTQFRIISRLDKKSDESLEHYFYSFV). At serine 1865 the chain carries Phosphoserine. Disordered regions lie at residues 1951-1978 (SEDS…TVEG), 1997-2059 (EPWK…ASGI), 2124-2147 (LPTP…ATEH), 2321-2350 (TTLS…QAEK), 2373-2419 (GFGT…RGFL), 2550-2602 (SASL…ITTS), and 2641-2711 (RHSE…EDTN). Residues 2017-2036 (SEPKPEDMDFENKDDYEKDG) are compositionally biased toward basic and acidic residues. 2 stretches are compositionally biased toward low complexity: residues 2130–2140 (SSSAGSRSSLS) and 2333–2349 (ATSS…SQAE). Positions 2550 to 2563 (SASLASTKSGTSAT) are enriched in low complexity. Basic and acidic residues predominate over residues 2565–2586 (KSTEDKLSGHDVNTDALVDDKP). 2 stretches are compositionally biased toward polar residues: residues 2591–2602 (FSDQSEPTITTS) and 2677–2688 (SDQNCTESSATV). Over residues 2690 to 2711 (PEREHVAQAREEGLKDSNEDTN) the composition is skewed to basic and acidic residues.

The protein belongs to the SNF2/RAD54 helicase family. As to quaternary structure, interacts with NFE2L2; involved in activation of the transcription. As to expression, widely expressed.

The protein resides in the nucleus. Its subcellular location is the nucleoplasm. It carries out the reaction ATP + H2O = ADP + phosphate + H(+). ATP-dependent chromatin-remodeling factor. Regulates transcription by disrupting nucleosomes in a largely non-sliding manner which strongly increases the accessibility of chromatin. Activates transcription of specific genes in response to oxidative stress through interaction with NFE2L2. The polypeptide is Chromodomain-helicase-DNA-binding protein 6 (Chd6) (Mus musculus (Mouse)).